An 831-amino-acid polypeptide reads, in one-letter code: uncharacterized protein (831 aa).

In terms of domain architecture, CID spans 1-146; sequence MDIFDSTITS…RAFSILSGVA (146 aa). 4 disordered regions span residues 205–233, 265–354, 434–480, and 572–831; these read SSSS…SSIS, KEHF…NYNN, IGNS…NEDS, and CGAD…SNRH. 2 stretches are compositionally biased toward low complexity: residues 272 to 354 and 434 to 477; these read NDTS…NYNN and IGNS…NNNN. Composition is skewed to basic and acidic residues over residues 592–601 and 611–813; these read NENKQNDSHR and SRGE…RSKE. The segment covering 817–831 has biased composition (low complexity); it reads NNDNRSSSNRSSNRH.

This is an uncharacterized protein from Dictyostelium discoideum (Social amoeba).